Reading from the N-terminus, the 855-residue chain is Coiled-coil domain-containing protein 87 (855 aa).

Disordered stretches follow at residues 23–43 (LFPS…QDAT) and 278–302 (SRPS…PTSP). The segment covering 287-296 (PSHSPSSESH) has biased composition (low complexity). 2 coiled-coil regions span residues 387–413 (TRRL…EASG) and 764–789 (RSYL…ESVF).

This sequence belongs to the CCDC87 family. As to expression, specifically expressed in testis (at protein level). Not detected in other tissues tested (at protein level). In the testis, localizes to pachytene spermatocytes and spermatids.

Functionally, plays a role in spermatogenesis, where it is important for normal sperm head morphology. Also required for the acrosome reaction and thus normal male fertility. The polypeptide is Coiled-coil domain-containing protein 87 (Ccdc87) (Mus musculus (Mouse)).